The chain runs to 166 residues: Crossover junction endodeoxyribonuclease RuvC (166 aa).

Residues Asp7, Glu67, and Asp140 contribute to the active site. Mg(2+) contacts are provided by Asp7, Glu67, and Asp140.

This sequence belongs to the RuvC family. In terms of assembly, homodimer which binds Holliday junction (HJ) DNA. The HJ becomes 2-fold symmetrical on binding to RuvC with unstacked arms; it has a different conformation from HJ DNA in complex with RuvA. In the full resolvosome a probable DNA-RuvA(4)-RuvB(12)-RuvC(2) complex forms which resolves the HJ. The cofactor is Mg(2+).

The protein resides in the cytoplasm. It carries out the reaction Endonucleolytic cleavage at a junction such as a reciprocal single-stranded crossover between two homologous DNA duplexes (Holliday junction).. The RuvA-RuvB-RuvC complex processes Holliday junction (HJ) DNA during genetic recombination and DNA repair. Endonuclease that resolves HJ intermediates. Cleaves cruciform DNA by making single-stranded nicks across the HJ at symmetrical positions within the homologous arms, yielding a 5'-phosphate and a 3'-hydroxyl group; requires a central core of homology in the junction. The consensus cleavage sequence is 5'-(A/T)TT(C/G)-3'. Cleavage occurs on the 3'-side of the TT dinucleotide at the point of strand exchange. HJ branch migration catalyzed by RuvA-RuvB allows RuvC to scan DNA until it finds its consensus sequence, where it cleaves and resolves the cruciform DNA. This chain is Crossover junction endodeoxyribonuclease RuvC, found in Brevibacillus brevis (strain 47 / JCM 6285 / NBRC 100599).